We begin with the raw amino-acid sequence, 158 residues long: Molybdopterin synthase catalytic subunit (158 aa).

Substrate contacts are provided by residues 107–108 (HR), lysine 123, and 130–132 (KKE).

The protein belongs to the MoaE family. MOCS2B subfamily. As to quaternary structure, heterotetramer; composed of 2 small (mocs2s) and 2 large (mocs2l) subunits.

It localises to the cytoplasm. The catalysed reaction is 2 [molybdopterin-synthase sulfur-carrier protein]-C-terminal-Gly-aminoethanethioate + cyclic pyranopterin phosphate + H2O = molybdopterin + 2 [molybdopterin-synthase sulfur-carrier protein]-C-terminal Gly-Gly + 2 H(+). Its pathway is cofactor biosynthesis; molybdopterin biosynthesis. Functionally, catalytic subunit of the molybdopterin synthase complex, a complex that catalyzes the conversion of precursor Z into molybdopterin. Acts by mediating the incorporation of 2 sulfur atoms from thiocarboxylated mocs2s into precursor Z to generate a dithiolene group. The protein is Molybdopterin synthase catalytic subunit (mocs2l) of Dictyostelium discoideum (Social amoeba).